The following is a 295-amino-acid chain: Aspartate carbamoyltransferase catalytic subunit (295 aa).

Carbamoyl phosphate is bound by residues Arg-54 and Thr-55. Lys-82 provides a ligand contact to L-aspartate. Carbamoyl phosphate contacts are provided by Arg-104, His-132, and Gln-135. Positions 165 and 218 each coordinate L-aspartate. Carbamoyl phosphate-binding residues include Gly-257 and Pro-258.

The protein belongs to the aspartate/ornithine carbamoyltransferase superfamily. ATCase family. As to quaternary structure, heterododecamer (2C3:3R2) of six catalytic PyrB chains organized as two trimers (C3), and six regulatory PyrI chains organized as three dimers (R2).

It catalyses the reaction carbamoyl phosphate + L-aspartate = N-carbamoyl-L-aspartate + phosphate + H(+). Its pathway is pyrimidine metabolism; UMP biosynthesis via de novo pathway; (S)-dihydroorotate from bicarbonate: step 2/3. Catalyzes the condensation of carbamoyl phosphate and aspartate to form carbamoyl aspartate and inorganic phosphate, the committed step in the de novo pyrimidine nucleotide biosynthesis pathway. The polypeptide is Aspartate carbamoyltransferase catalytic subunit (Wolbachia pipientis subsp. Culex pipiens (strain wPip)).